The sequence spans 347 residues: Protein RecA (347 aa).

An ATP-binding site is contributed by 67 to 74 (GPESSGKT).

This sequence belongs to the RecA family.

It localises to the cytoplasm. Can catalyze the hydrolysis of ATP in the presence of single-stranded DNA, the ATP-dependent uptake of single-stranded DNA by duplex DNA, and the ATP-dependent hybridization of homologous single-stranded DNAs. It interacts with LexA causing its activation and leading to its autocatalytic cleavage. The sequence is that of Protein RecA from Sulfurovum sp. (strain NBC37-1).